The following is a 79-amino-acid chain: uncharacterized protein (79 aa).

Transmembrane regions (helical) follow at residues 28–48 and 51–71; these read CIIL…ALLA and VALT…AFTV.

Its subcellular location is the cell membrane. This is an uncharacterized protein from Methanocaldococcus jannaschii (strain ATCC 43067 / DSM 2661 / JAL-1 / JCM 10045 / NBRC 100440) (Methanococcus jannaschii).